The following is a 227-amino-acid chain: uncharacterized protein (227 aa).

The chain crosses the membrane as a helical span at residues 7-26; the sequence is IITLTILIFISGLLTAFLLL.

Its subcellular location is the membrane. This is an uncharacterized protein from Haemophilus influenzae (strain ATCC 51907 / DSM 11121 / KW20 / Rd).